The primary structure comprises 305 residues: MTEVDLKALLADVDGDVATELASKPEVIDKGHELDISTLPIQARKWHKLRDAVAVVADLKSSTQLGLNKHAASTASIYEAATGGVVQIFDEFDANFVAIQGDGAFALFWGDKRRQRAVCAGITIKTFSFKHLVPRLEKKWDGLPETGLKVGLGSSPLLVKRVGVPRTEHQEPVWAGRAVNYAAKAAQQADRHEMVVTGTIWDWVSDNDFLAVTCSCSNPNPDLWSNITIEKIPDGDGDREGKRLTSSWCDVHGPEYCAAVLEGKKRRADVTTQRTSALAAEMKSWVRNKAAQDRKNRLARYQGLH.

Aspartate 58 and aspartate 102 together coordinate Mn(2+).

The protein belongs to the adenylyl cyclase class-4/guanylyl cyclase family. Pyrimidine cyclase subfamily. Homodimer. It depends on Mn(2+) as a cofactor.

It localises to the cytoplasm. The enzyme catalyses GTP = 3',5'-cyclic GMP + diphosphate. It catalyses the reaction UTP = 3',5'-cyclic UMP + diphosphate. Its function is as follows. Pycsar (pyrimidine cyclase system for antiphage resistance) provides immunity against bacteriophage. The pyrimidine cyclase (PycC) synthesizes cyclic nucleotides in response to infection; these serve as specific second messenger signals. The signals activate the adjacent effector, leading to bacterial cell death and abortive phage infection. A clade D Pycsar system. Functionally, the pyrimidine cyclase gene of a two-gene Pycsar system, generates cyclic UMP (cUMP) from UTP as well as cGMP from GTP to a lesser extent, has little to no activity on ATP or CTP. Expression of this and adjacent effector MePycTM (AC A0A1C5G2D0) probably confers resistance to bacteriophage. The genes are probably only expressed in response to bacteriophage infection. The protein is Uridylate cyclase of Micromonospora echinofusca.